A 185-amino-acid polypeptide reads, in one-letter code: ATP synthase subunit b 2 (185 aa).

Residues 1–23 (MAEGHGDAKGATAHTAADGGHKA) are disordered. Residues 9–18 (KGATAHTAAD) are compositionally biased toward low complexity. A helical transmembrane segment spans residues 32-51 (TFASQLVSLTIAFVALYLIV).

The protein belongs to the ATPase B chain family. As to quaternary structure, F-type ATPases have 2 components, F(1) - the catalytic core - and F(0) - the membrane proton channel. F(1) has five subunits: alpha(3), beta(3), gamma(1), delta(1), epsilon(1). F(0) has three main subunits: a(1), b(2) and c(10-14). The alpha and beta chains form an alternating ring which encloses part of the gamma chain. F(1) is attached to F(0) by a central stalk formed by the gamma and epsilon chains, while a peripheral stalk is formed by the delta and b chains.

The protein resides in the cell inner membrane. In terms of biological role, f(1)F(0) ATP synthase produces ATP from ADP in the presence of a proton or sodium gradient. F-type ATPases consist of two structural domains, F(1) containing the extramembraneous catalytic core and F(0) containing the membrane proton channel, linked together by a central stalk and a peripheral stalk. During catalysis, ATP synthesis in the catalytic domain of F(1) is coupled via a rotary mechanism of the central stalk subunits to proton translocation. Its function is as follows. Component of the F(0) channel, it forms part of the peripheral stalk, linking F(1) to F(0). The b'-subunit is a diverged and duplicated form of b found in plants and photosynthetic bacteria. In Rhodopseudomonas palustris (strain HaA2), this protein is ATP synthase subunit b 2 (atpF2).